The following is a 695-amino-acid chain: Follicle-stimulating hormone receptor (695 aa).

Positions Met-1–Gly-17 are cleaved as a signal peptide. 2 disulfides stabilise this stretch: Cys-18/Cys-25 and Cys-23/Cys-32. One can recognise an LRRNT domain in the interval Cys-18 to Arg-46. Topologically, residues Cys-18–Arg-366 are extracellular. LRR repeat units lie at residues Val-49 to Leu-72, Glu-73 to Leu-97, His-98 to Asn-118, Leu-119 to Ser-143, Leu-144 to Ser-169, Phe-170 to Gly-192, Thr-193 to Gly-216, Ala-217 to Asn-240, and Ile-241 to Asp-259. The N-linked (GlcNAc...) asparagine glycan is linked to Asn-93. N-linked (GlcNAc...) asparagine glycosylation is found at Asn-191 and Asn-199. Cystine bridges form between Cys-275–Cys-346, Cys-276–Cys-292, Cys-276–Cys-356, and Cys-292–Cys-338. An N-linked (GlcNAc...) asparagine glycan is attached at Asn-293. A Sulfotyrosine modification is found at Tyr-335. A helical membrane pass occupies residues Val-367–Leu-387. Topologically, residues Ile-388 to Arg-398 are cytoplasmic. A helical membrane pass occupies residues Phe-399–Ala-419. Topologically, residues Ser-420–Ala-444 are extracellular. Residues Ala-445–Leu-465 traverse the membrane as a helical segment. Residues Glu-466 to Ala-487 are Cytoplasmic-facing. The chain crosses the membrane as a helical span at residues Ile-488–Ile-508. Topologically, residues Ser-509–Gln-528 are extracellular. A helical transmembrane segment spans residues Leu-529–Ala-550. Topologically, residues His-551–Arg-573 are cytoplasmic. A helical membrane pass occupies residues Met-574 to Ser-594. Residues Ala-595–Lys-608 lie on the Extracellular side of the membrane. A helical transmembrane segment spans residues Ile-609 to Phe-629. Over Thr-630–Asn-695 the chain is Cytoplasmic.

This sequence belongs to the G-protein coupled receptor 1 family. FSH/LSH/TSH subfamily. Homotrimer. Functions as a homotrimer binding the FSH hormone heterodimer composed of CGA and FSHB. Interacts with ARRB2. Interacts with APPL2; interaction is independent of follicle stimulating hormone stimulation. Post-translationally, N-glycosylated; indirectly required for FSH-binding, possibly via a conformational change that allows high affinity binding of hormone. In terms of processing, sulfated.

Its subcellular location is the cell membrane. Its function is as follows. G protein-coupled receptor for follitropin, the follicle-stimulating hormone. Through cAMP production activates the downstream PI3K-AKT and ERK1/ERK2 signaling pathways. The polypeptide is Follicle-stimulating hormone receptor (FSHR) (Felis catus (Cat)).